The primary structure comprises 85 residues: Phosphocarrier protein HPr (85 aa).

One can recognise an HPr domain in the interval 1–85 (MFQRDIKITT…DLAKFLTTLK (85 aa)). Histidine 15 functions as the Pros-phosphohistidine intermediate in the catalytic mechanism.

Belongs to the HPr family.

It localises to the cytoplasm. In terms of biological role, general (non sugar-specific) component of the phosphoenolpyruvate-dependent sugar phosphotransferase system (sugar PTS). This major carbohydrate active-transport system catalyzes the phosphorylation of incoming sugar substrates concomitantly with their translocation across the cell membrane. The phosphoryl group from phosphoenolpyruvate (PEP) is transferred to the phosphoryl carrier protein HPr by enzyme I. Phospho-HPr then transfers it to the PTS EIIA domain. The sequence is that of Phosphocarrier protein HPr (ptsH) from Buchnera aphidicola subsp. Baizongia pistaciae (strain Bp).